The following is a 909-amino-acid chain: Coatomer subunit beta'-3 (909 aa).

WD repeat units lie at residues 13–52, 55–94, 97–136, 140–180, 183–224, 227–266, 269–309, 351–390, and 461–501; these read QRSE…ITKS, VTEL…KVKV, AHSD…ACTQ, GHSH…PNFT, AHQK…CVQT, GHTH…LENT, YGLE…ASMD, TCDL…RSFG, and QIDV…SHFD. A disordered region spans residues 862-909; it reads EENGHVENEGDEEEQQEEEVNEEEGVVDADSTDGAVLVNGSEVLTPHP. The segment covering 870–892 has biased composition (acidic residues); the sequence is EGDEEEQQEEEVNEEEGVVDADS.

Belongs to the WD repeat COPB2 family. As to quaternary structure, oligomeric complex that consists of at least the alpha, beta, beta', gamma, delta, epsilon and zeta subunits.

The protein resides in the cytoplasm. Its subcellular location is the golgi apparatus membrane. The protein localises to the cytoplasmic vesicle. It localises to the COPI-coated vesicle membrane. In terms of biological role, the coatomer is a cytosolic protein complex that binds to dilysine motifs and reversibly associates with Golgi non-clathrin-coated vesicles, which further mediate biosynthetic protein transport from the ER, via the Golgi up to the trans Golgi network. Coatomer complex is required for budding from Golgi membranes, and is essential for the retrograde Golgi-to-ER transport of dilysine-tagged proteins. The sequence is that of Coatomer subunit beta'-3 from Arabidopsis thaliana (Mouse-ear cress).